Consider the following 188-residue polypeptide: Probable manganese efflux pump MntP (188 aa).

5 helical membrane passes run 3 to 23 (ITATVLLAFGMSMDAFAASIG), 66 to 86 (LEWNHWIAFVLLIFLGGRMII), 106 to 128 (WLLVTTAIATSLDAMAVGVGLAF), 143 to 163 (ATLIMSTLGMMVGRFIGSIIG), and 168 to 188 (ILGGLVLIGIGVQILWTHFHG).

The protein belongs to the MntP (TC 9.B.29) family.

The protein resides in the cell inner membrane. Its function is as follows. Probably functions as a manganese efflux pump. This is Probable manganese efflux pump MntP from Escherichia coli O139:H28 (strain E24377A / ETEC).